The primary structure comprises 222 residues: Eukaryotic translation initiation factor 3 subunit K (222 aa).

Positions 46 to 208 (YDLEANLAVL…KIKTKNITEK (163 aa)) constitute a PCI domain.

This sequence belongs to the eIF-3 subunit K family. In terms of assembly, component of the eukaryotic translation initiation factor 3 (eIF-3) complex. The eIF-3 complex interacts with pix.

It localises to the cytoplasm. Functionally, component of the eukaryotic translation initiation factor 3 (eIF-3) complex, which is involved in protein synthesis of a specialized repertoire of mRNAs and, together with other initiation factors, stimulates binding of mRNA and methionyl-tRNAi to the 40S ribosome. The eIF-3 complex specifically targets and initiates translation of a subset of mRNAs involved in cell proliferation. The sequence is that of Eukaryotic translation initiation factor 3 subunit K from Drosophila ananassae (Fruit fly).